We begin with the raw amino-acid sequence, 305 residues long: Putative monooxygenase p33MONOX (305 aa).

Disordered regions lie at residues 1-20 (MASR…LGKM) and 37-56 (LEDP…VPWK). A Phosphothreonine modification is found at Thr-44. Positions 67-77 (LAKVEEGEASL) match the Flavin-containing monooxygenase motif motif. The segment at 159 to 305 (SGEITKEERQ…DLNVLTPTGF (147 aa)) is disordered. Positions 169–183 (PASAQSTPSTTPHSS) are enriched in low complexity. Phosphothreonine is present on Thr-175. Ser-182 and Ser-183 each carry phosphoserine. Composition is skewed to polar residues over residues 191 to 210 (WFTS…TMDS) and 233 to 243 (KYDSGSSTTQA).

Belongs to the P33MONOX family. In terms of assembly, interacts with NELFB, NOL12 and PRNP.

It is found in the cytoplasm. In terms of biological role, potential NADPH-dependent oxidoreductase. May be involved in the regulation of neuronal survival, differentiation and axonal outgrowth. The protein is Putative monooxygenase p33MONOX (P33MONOX) of Pongo abelii (Sumatran orangutan).